The chain runs to 1734 residues: Gag-pol polyprotein (1734 aa).

A lipid anchor (N-myristoyl glycine; by host) is attached at glycine 2. The PTAP/PSAP motif signature appears at 109 to 112 (PTAP). The segment at 112-217 (PILPSGPSTQ…STTSRAFPLR (106 aa)) is disordered. The LYPX(n)L motif motif lies at 128-132 (LYPAF). The short motif at 161–164 (PPPY) is the PPXY motif element. Serine 191 bears the Phosphoserine; by host mark. An interaction with host PIAS4 region spans residues 344–392 (GRSPTNLAKVKGITQGPNESPSAFLERLKEAYRRYTPYDPEDPGQETNV). Positions 429–434 (IFNKRE) are interaction with host UBE2I. 2 stretches are compositionally biased toward basic and acidic residues: residues 433 to 474 (RETP…REMS) and 485 to 498 (RQDR…RPQL). Disordered regions lie at residues 433-498 (RETP…RPQL) and 512-551 (WAKD…EPRI). Residues 501-518 (DQCAYCKEKGHWAKDCPK) form a CCHC-type zinc finger. One can recognise a Peptidase A2 domain in the interval 560–630 (VTFLVDTGAQ…CPYPLLGRDL (71 aa)). Aspartate 565 (protease; shared with dimeric partner) is an active-site residue. One can recognise a Reverse transcriptase domain in the interval 740–931 (LDQGILVPCQ…KQVKYLGYLL (192 aa)). Residues aspartate 808, aspartate 882, aspartate 883, aspartate 1182, glutamate 1220, aspartate 1241, and aspartate 1311 each coordinate Mg(2+). An RNase H type-1 domain is found at 1173–1319 (PDADHTWYTD…ADQAAREAAI (147 aa)). The HHCC-type zinc finger occupies 1386-1426 (HRLTHLGYQKMKALLDRGESPYYMLNRDKTLQYVADSCTVC). In terms of domain architecture, Integrase catalytic spans 1443–1601 (RGHRPGTHWE…TPYEILYGAP (159 aa)). Mg(2+) contacts are provided by aspartate 1454 and aspartate 1513.

As to quaternary structure, homohexamer; further associates as homomultimer. The virus core is composed of a lattice formed from hexagonal rings, each containing six capsid monomers. Interacts with mouse UBE2I and mouse PIAS4. In terms of assembly, interacts (via PPXY motif) with host NEDD4. Interacts (via PSAP motif) with host TSG101. Interacts (via LYPX(n)L motif) with host PDCD6IP. The reverse transcriptase is a monomer (Potential). Interacts (via RNase domains) with host release factor ETF1; this interaction is essential for translational readthrough of amber codon between viral gag and pol genes, as well as for viral replication. As to quaternary structure, homodimer. Mg(2+) serves as cofactor. Ubiquitinated by ITCH. Gag can recruit the ubiquitin ligase Itch in an L domain-independent manner to facilitate virus release via a mechanism that involves Gag ubiquitination. Post-translationally, specific enzymatic cleavages by the viral protease yield mature proteins. The protease is released by autocatalytic cleavage. The polyprotein is cleaved during and after budding, this process is termed maturation. In terms of processing, sumoylated; which is required for virus replication. Phosphorylated on serine residues.

It localises to the virion. The protein localises to the host cell membrane. The protein resides in the host late endosome membrane. Its subcellular location is the host endosome. It is found in the host multivesicular body. It localises to the host cytoplasm. The enzyme catalyses DNA(n) + a 2'-deoxyribonucleoside 5'-triphosphate = DNA(n+1) + diphosphate. The catalysed reaction is Endonucleolytic cleavage to 5'-phosphomonoester.. Most efficiently inhibited by Amprenavir, which is able to block Gag-Pol processing in infected cells. Functionally, plays a role in budding and is processed by the viral protease during virion maturation outside the cell. During budding, it recruits, in a PPXY-dependent or independent manner, Nedd4-like ubiquitin ligases that conjugate ubiquitin molecules to Gag-Pol, or to Gag-Pol binding host factors. Interaction with HECT ubiquitin ligases probably links the viral protein to the host ESCRT pathway and facilitates release. Its function is as follows. Targets Gag and gag-pol polyproteins to the plasma membrane via a multipartite membrane binding signal, that includes its myristoylated N-terminus. Also mediates nuclear localization of the pre-integration complex. Constituent of the pre-integration complex (PIC) which tethers the latter to mitotic chromosomes. This allows the integration of the viral genome into the host DNA. In terms of biological role, forms the spherical core of the virion that encapsulates the genomic RNA-nucleocapsid complex. Functionally, involved in the packaging and encapsidation of two copies of the genome. Binds with high affinity to conserved UCUG elements within the packaging signal, located near the 5'-end of the genome. This binding is dependent on genome dimerization. Acts as a nucleic acid chaperone which is involved in rearrangement of nucleic acid secondary structures during gRNA retrotranscription. Its function is as follows. The aspartyl protease mediates proteolytic cleavages of Gag and Gag-Pol polyproteins during or shortly after the release of the virion from the plasma membrane. Cleavages take place as an ordered, step-wise cascade to yield mature proteins. This process is called maturation. Displays maximal activity during the budding process just prior to particle release from the cell (Potential). Cleaves the translation initiation factor eIF4G leading to the inhibition of host cap-dependent translation. RT is a multifunctional enzyme that converts the viral dimeric RNA genome into dsDNA in the cytoplasm, shortly after virus entry into the cell. This enzyme displays a DNA polymerase activity that can copy either DNA or RNA templates, and a ribonuclease H (RNase H) activity that cleaves the RNA strand of RNA-DNA heteroduplexes in a partially processive 3' to 5' endonucleasic mode. Conversion of viral genomic RNA into dsDNA requires many steps. A tRNA binds to the primer-binding site (PBS) situated at the 5' end of the viral RNA. RT uses the 3' end of the tRNA primer to perform a short round of RNA-dependent minus-strand DNA synthesis. The reading proceeds through the U5 region and ends after the repeated (R) region which is present at both ends of viral RNA. The portion of the RNA-DNA heteroduplex is digested by the RNase H, resulting in a ssDNA product attached to the tRNA primer. This ssDNA/tRNA hybridizes with the identical R region situated at the 3' end of viral RNA. This template exchange, known as minus-strand DNA strong stop transfer, can be either intra- or intermolecular. RT uses the 3' end of this newly synthesized short ssDNA to perform the RNA-dependent minus-strand DNA synthesis of the whole template. RNase H digests the RNA template except for a polypurine tract (PPT) situated at the 5' end of the genome. It is not clear if both polymerase and RNase H activities are simultaneous. RNase H probably can proceed both in a polymerase-dependent (RNA cut into small fragments by the same RT performing DNA synthesis) and a polymerase-independent mode (cleavage of remaining RNA fragments by free RTs). Secondly, RT performs DNA-directed plus-strand DNA synthesis using the PPT that has not been removed by RNase H as primers. PPT and tRNA primers are then removed by RNase H. The 3' and 5' ssDNA PBS regions hybridize to form a circular dsDNA intermediate. Strand displacement synthesis by RT to the PBS and PPT ends produces a blunt ended, linear dsDNA copy of the viral genome that includes long terminal repeats (LTRs) at both ends. In terms of biological role, catalyzes viral DNA integration into the host chromosome, by performing a series of DNA cutting and joining reactions. This enzyme activity takes place after virion entry into a cell and reverse transcription of the RNA genome in dsDNA. The first step in the integration process is 3' processing. This step requires a complex comprising the viral genome, matrix protein and integrase. This complex is called the pre-integration complex (PIC). The integrase protein removes 2 nucleotides from each 3' end of the viral DNA, leaving recessed CA OH's at the 3' ends. In the second step that requires cell division, the PIC enters cell nucleus. In the third step, termed strand transfer, the integrase protein joins the previously processed 3' ends to the 5' ends of strands of target cellular DNA at the site of integration. The last step is viral DNA integration into host chromosome. The protein is Gag-pol polyprotein (gag-pol) of Mus musculus (Mouse).